The chain runs to 88 residues: Kunitz-type U15-theraphotoxin-Hhn1d (88 aa).

A signal peptide spans 1–27; the sequence is MGTARFLRAVLLLSVLLMVTFPALLSA. A propeptide spanning residues 28-33 is cleaved from the precursor; that stretch reads EHHDGR. A BPTI/Kunitz inhibitor domain is found at 37-85; the sequence is CRLPSDSGECSRFFGMWYFDGTTCTKFVYGGYGGNDNRFPTEKACMKRC. Cystine bridges form between C37-C85 and C60-C81.

Belongs to the venom Kunitz-type family. 03 (sub-Kunitz) subfamily. As to expression, expressed by the venom gland.

The protein localises to the secreted. Its function is as follows. Serine protease inhibitor that inhibits trypsin at a molar ratio of 1:1. This chain is Kunitz-type U15-theraphotoxin-Hhn1d, found in Cyriopagopus hainanus (Chinese bird spider).